The chain runs to 94 residues: Large ribosomal subunit protein bL28 (94 aa).

Residues 1–21 (MARRCEVTGRGTVSGNNVSHS) form a disordered region. The segment covering 11–20 (GTVSGNNVSH) has biased composition (polar residues).

This sequence belongs to the bacterial ribosomal protein bL28 family.

This Leptospira borgpetersenii serovar Hardjo-bovis (strain JB197) protein is Large ribosomal subunit protein bL28.